The primary structure comprises 306 residues: 2-phospho-L-lactate transferase (306 aa).

Asp48 lines the 7,8-didemethyl-8-hydroxy-5-deazariboflavin pocket.

This sequence belongs to the CofD family. Homodimer. Requires Mg(2+) as cofactor.

The enzyme catalyses (2S)-lactyl-2-diphospho-5'-guanosine + 7,8-didemethyl-8-hydroxy-5-deazariboflavin = oxidized coenzyme F420-0 + GMP + H(+). It participates in cofactor biosynthesis; coenzyme F420 biosynthesis. In terms of biological role, catalyzes the transfer of the 2-phospholactate moiety from (2S)-lactyl-2-diphospho-5'-guanosine to 7,8-didemethyl-8-hydroxy-5-deazariboflavin (FO) with the formation of oxidized coenzyme F420-0 and GMP. The sequence is that of 2-phospho-L-lactate transferase from Methanococcoides burtonii (strain DSM 6242 / NBRC 107633 / OCM 468 / ACE-M).